The chain runs to 608 residues: Probable Ufm1-specific protease 2 (608 aa).

Catalysis depends on residues Cys-441, Asp-565, and His-567.

This sequence belongs to the peptidase C78 family.

In terms of biological role, thiol protease which recognizes and hydrolyzes the peptide bond at the C-terminal Gly of UFM1, a ubiquitin-like modifier protein bound to a number of target proteins. Does not hydrolyze SUMO1 or ISG15 ubiquitin-like proteins. This is Probable Ufm1-specific protease 2 from Drosophila pseudoobscura pseudoobscura (Fruit fly).